A 119-amino-acid polypeptide reads, in one-letter code: Large ribosomal subunit protein uL18 (119 aa).

The interval Leu54 to Val76 is disordered.

This sequence belongs to the universal ribosomal protein uL18 family. As to quaternary structure, part of the 50S ribosomal subunit; part of the 5S rRNA/L5/L18/L25 subcomplex. Contacts the 5S and 23S rRNAs.

Its function is as follows. This is one of the proteins that bind and probably mediate the attachment of the 5S RNA into the large ribosomal subunit, where it forms part of the central protuberance. The sequence is that of Large ribosomal subunit protein uL18 from Salinibacter ruber (strain DSM 13855 / M31).